Consider the following 178-residue polypeptide: Ribonuclease M5 (178 aa).

The Toprim domain maps to 10–103 (DGVIVCEGKT…NSTKIGVAEA (94 aa)). The Mg(2+) site is built by Glu-16, Asp-62, and Asp-64.

Belongs to the ribonuclease M5 family. Mg(2+) serves as cofactor.

The protein resides in the cytoplasm. It catalyses the reaction Endonucleolytic cleavage of RNA, removing 21 and 42 nucleotides, respectively, from the 5'- and 3'-termini of a 5S-rRNA precursor.. Its function is as follows. Required for correct processing of both the 5' and 3' ends of 5S rRNA precursor. Cleaves both sides of a double-stranded region yielding mature 5S rRNA in one step. The protein is Ribonuclease M5 of Mycoplasma pneumoniae (strain ATCC 29342 / M129 / Subtype 1) (Mycoplasmoides pneumoniae).